We begin with the raw amino-acid sequence, 994 residues long: Leucine-rich repeat receptor-like kinase protein FLORAL ORGAN NUMBER1 (994 aa).

The N-terminal stretch at 1 to 17 is a signal peptide; it reads MPPTLLLLLLLLPPSLA. LRR repeat units follow at residues 73-93, 94-117, 118-141, 147-171, 172-194, 195-219, 244-268, 269-292, 293-316, 318-340, 341-364, 365-388, 390-412, 413-436, 438-459, 460-483, 484-507, 509-531, 533-555, 556-579, and 581-604; these read AINL…IALL, DSLA…LPTL, PSLR…DSGG, FPSL…SASH, ARLR…SYGD, LAAL…LSRL, LGAL…LGRL, QRLD…LGDL, SSLA…LANL, NLKL…VAGF, AQLE…LGKN, GRLK…LCAG, RLEM…LGDC, KTLT…LFNL, QANM…VIGG, DKIG…IGNL, PALQ…IGNL, NLSR…LIRC, SLAA…ITSL, KILC…MSNM, and SLTT…QFLV. Asparagine 75, asparagine 98, asparagine 124, asparagine 129, and asparagine 159 each carry an N-linked (GlcNAc...) asparagine glycan. Asparagine 256 is a glycosylation site (N-linked (GlcNAc...) asparagine). N-linked (GlcNAc...) asparagine glycosylation occurs at asparagine 315. A glycan (N-linked (GlcNAc...) asparagine) is linked at asparagine 352. Residues asparagine 495, asparagine 509, and asparagine 514 are each glycosylated (N-linked (GlcNAc...) asparagine). 2 N-linked (GlcNAc...) asparagine glycosylation sites follow: asparagine 562 and asparagine 578. N-linked (GlcNAc...) asparagine glycosylation is present at asparagine 606. A helical membrane pass occupies residues 647-667; sequence KKMLVALVAAFAAVAVAFLGA. Positions 704–978 constitute a Protein kinase domain; it reads VKEDNIIGKG…TMREVVHMLS (275 aa). ATP-binding positions include 710-718 and lysine 731; that span reads IGKGGAGIV. The active-site Proton acceptor is the aspartate 828.

The protein belongs to the protein kinase superfamily. Ser/Thr protein kinase family. In terms of tissue distribution, expressed in shoot apical meristem, and after transition to the reproductive phase, detected in the inflorescence and the floral meristems. Expressed uniformly throughout the meristems. Expressed also in floral organ primordia, such as the palea, lemma, lodicules, stamens, carpels and ovules.

The protein localises to the membrane. The catalysed reaction is L-seryl-[protein] + ATP = O-phospho-L-seryl-[protein] + ADP + H(+). The enzyme catalyses L-threonyl-[protein] + ATP = O-phospho-L-threonyl-[protein] + ADP + H(+). In terms of biological role, receptor-like kinase protein that regulates the size of the floral meristem. The sequence is that of Leucine-rich repeat receptor-like kinase protein FLORAL ORGAN NUMBER1 (FON1) from Oryza sativa subsp. japonica (Rice).